The chain runs to 299 residues: Ribosomal protein L11 methyltransferase (299 aa).

Thr152, Gly172, Asp194, and Asn234 together coordinate S-adenosyl-L-methionine.

The protein belongs to the methyltransferase superfamily. PrmA family.

It localises to the cytoplasm. It carries out the reaction L-lysyl-[protein] + 3 S-adenosyl-L-methionine = N(6),N(6),N(6)-trimethyl-L-lysyl-[protein] + 3 S-adenosyl-L-homocysteine + 3 H(+). Functionally, methylates ribosomal protein L11. This Geobacter sulfurreducens (strain ATCC 51573 / DSM 12127 / PCA) protein is Ribosomal protein L11 methyltransferase.